The chain runs to 243 residues: UMP-CMP kinase 2 (243 aa).

Gly69–Thr74 contributes to the ATP binding site. The interval Ser89–Val118 is NMP. Residues Arg95, Lys116–Val118, and Gly143–Arg146 each bind a ribonucleoside 5'-phosphate. Asn150 lines the CMP pocket. The interval Gly181–Asp189 is LID. An ATP-binding site is contributed by Arg182. The a ribonucleoside 5'-phosphate site is built by Arg186 and Arg197.

It belongs to the adenylate kinase family. UMP-CMP kinase subfamily. In terms of assembly, monomer. It depends on Mg(2+) as a cofactor.

Its subcellular location is the cytoplasm. The protein resides in the nucleus. The enzyme catalyses UMP + ATP = UDP + ADP. It catalyses the reaction CMP + ATP = CDP + ADP. It carries out the reaction dCMP + ATP = dCDP + ADP. In terms of biological role, catalyzes the phosphorylation of pyrimidine nucleoside monophosphates at the expense of ATP. Plays an important role in de novo pyrimidine nucleotide biosynthesis. Has preference for UMP and CMP as phosphate acceptors. In Oryza sativa subsp. japonica (Rice), this protein is UMP-CMP kinase 2.